Here is a 389-residue protein sequence, read N- to C-terminus: Phospho-N-acetylmuramoyl-pentapeptide-transferase (389 aa).

The next 10 helical transmembrane spans lie at 25 to 45, 74 to 94, 97 to 117, 134 to 154, 190 to 210, 222 to 242, 259 to 279, 286 to 306, 311 to 331, and 366 to 386; these read RAVMANLTALLIGLAFGPWVI, MGGVLVLVSIAVSTLLWCDWG, FIWVVMLVTFGYGAIGWVDDY, FFWQTLIGLVAAVYLAFSVSE, ISYPLGVAGFIVLTYLVIVGS, GLVIMPVVLVGGGLGVFAYVM, AGELLIFCSALAGAGLAFLWF, VFMGDVGALALGGALGTVAVI, IVLFVMGGIFVVETLSVMAQV, and QVTVRFWIITMLLVLIGLSTL.

It belongs to the glycosyltransferase 4 family. MraY subfamily. Mg(2+) is required as a cofactor.

The protein localises to the cell inner membrane. The catalysed reaction is UDP-N-acetyl-alpha-D-muramoyl-L-alanyl-gamma-D-glutamyl-meso-2,6-diaminopimeloyl-D-alanyl-D-alanine + di-trans,octa-cis-undecaprenyl phosphate = di-trans,octa-cis-undecaprenyl diphospho-N-acetyl-alpha-D-muramoyl-L-alanyl-D-glutamyl-meso-2,6-diaminopimeloyl-D-alanyl-D-alanine + UMP. It functions in the pathway cell wall biogenesis; peptidoglycan biosynthesis. Its function is as follows. Catalyzes the initial step of the lipid cycle reactions in the biosynthesis of the cell wall peptidoglycan: transfers peptidoglycan precursor phospho-MurNAc-pentapeptide from UDP-MurNAc-pentapeptide onto the lipid carrier undecaprenyl phosphate, yielding undecaprenyl-pyrophosphoryl-MurNAc-pentapeptide, known as lipid I. This chain is Phospho-N-acetylmuramoyl-pentapeptide-transferase, found in Cupriavidus necator (strain ATCC 17699 / DSM 428 / KCTC 22496 / NCIMB 10442 / H16 / Stanier 337) (Ralstonia eutropha).